The following is a 146-amino-acid chain: Hemoglobin subunit beta (146 aa).

Valine 1 carries the N-acetylvaline modification. The Globin domain occupies 2 to 146 (HLTADEKAAV…VANALAHKYH (145 aa)). Residue threonine 12 is modified to Phosphothreonine. Residue serine 44 is modified to Phosphoserine. Position 59 is an N6-acetyllysine (lysine 59). Histidine 63 provides a ligand contact to heme b. Lysine 82 is subject to N6-acetyllysine. Histidine 92 serves as a coordination point for heme b. S-nitrosocysteine is present on cysteine 93. At lysine 144 the chain carries N6-acetyllysine.

This sequence belongs to the globin family. In terms of assembly, heterotetramer of two alpha chains and two beta chains. Red blood cells.

In terms of biological role, involved in oxygen transport from the lung to the various peripheral tissues. This is Hemoglobin subunit beta (HBB) from Odobenus rosmarus divergens (Pacific walrus).